A 79-amino-acid polypeptide reads, in one-letter code: Cell division protein ZapB (79 aa).

A coiled-coil region spans residues 3–79 (LEVFEKLEAK…QALLGRMEEV (77 aa)). Residues 36–45 (SLTQEVQSAQ) show a composition bias toward polar residues. The tract at residues 36 to 63 (SLTQEVQSAQHQREELERENNSLKEQQS) is disordered. Over residues 46–57 (HQREELERENNS) the composition is skewed to basic and acidic residues.

This sequence belongs to the ZapB family. As to quaternary structure, homodimer. The ends of the coiled-coil dimer bind to each other, forming polymers. Interacts with FtsZ.

The protein resides in the cytoplasm. Its function is as follows. Non-essential, abundant cell division factor that is required for proper Z-ring formation. It is recruited early to the divisome by direct interaction with FtsZ, stimulating Z-ring assembly and thereby promoting cell division earlier in the cell cycle. Its recruitment to the Z-ring requires functional FtsA or ZipA. The sequence is that of Cell division protein ZapB from Salmonella agona (strain SL483).